We begin with the raw amino-acid sequence, 21 residues long: Peptide PGLa-R5 (21 aa).

L21 carries the post-translational modification Leucine amide.

In terms of tissue distribution, expressed by the skin glands.

Its subcellular location is the secreted. Antimicrobial peptide. The chain is Peptide PGLa-R5 from Xenopus ruwenzoriensis (Uganda clawed frog).